The sequence spans 436 residues: GTPase Der (436 aa).

EngA-type G domains follow at residues 4 to 167 and 176 to 351; these read PVVA…PKGG and IKFC…DNHA. Residues 10–17, 57–61, 119–122, 182–189, 229–233, and 294–297 contribute to the GTP site; these read GRPNVGKS, DTGGI, NKID, DTAGM, and NKWD. The KH-like domain maps to 352-436; the sequence is MRVQTNVLNE…PIKIIARPRK (85 aa).

This sequence belongs to the TRAFAC class TrmE-Era-EngA-EngB-Septin-like GTPase superfamily. EngA (Der) GTPase family. As to quaternary structure, associates with the 50S ribosomal subunit.

Functionally, GTPase that plays an essential role in the late steps of ribosome biogenesis. The sequence is that of GTPase Der from Geobacillus kaustophilus (strain HTA426).